The primary structure comprises 192 residues: ER protein translocation subcomplex subunit sec67 (192 aa).

In terms of assembly, component of the heterotetrameric Sec62/63complex composed of sec62, sec63, sec66 and sec72. The Sec62/63 complex associates with the Sec61 complex to form the Sec complex.

The protein localises to the cytoplasm. The protein resides in the nucleus. Functionally, acts as a non-essential component of the Sec62/63 complex which is involved in SRP-independent post-translational translocation across the endoplasmic reticulum (ER) and functions together with the Sec61 complex and bip1 in a channel-forming translocon complex. A cycle of assembly and disassembly of Sec62/63 complex from sec61 may govern the activity of the translocon. sec72 may be involved in signal peptide recognition for a defined subset of leader peptides, or may increase the efficiency of unusual or 'difficult' secretory precursors to the translocation pore, it may be that this protein binds charged leader peptides to the membrane until they engage the translocation apparatus. The chain is ER protein translocation subcomplex subunit sec67 (sec67) from Schizosaccharomyces pombe (strain 972 / ATCC 24843) (Fission yeast).